The following is a 2606-amino-acid chain: Large tegument protein deneddylase (2606 aa).

Residues 1–235 (MAFQAQTDTG…LKRSGAYVNL (235 aa)) are deubiquitination activity. Residues 14–225 (LATASSHQGD…LLANYGIASA (212 aa)) form the Peptidase C76 domain. Catalysis depends on residues Cys-34, Asp-163, and His-165. Disordered stretches follow at residues 318-349 (IAIS…PNEA), 390-411 (DTDS…KSGQ), 1020-1135 (KKGL…ESSE), 2253-2316 (PEIH…PTPL), and 2434-2458 (PPHD…ERKY). The segment covering 1038–1050 (TPVTDSKLIQDSQ) has biased composition (polar residues). Residues 1051–1061 (QNDRHQKEKPL) show a composition bias toward basic and acidic residues. Polar residues predominate over residues 1085–1097 (KPQNLSLPVSTNK). A compositionally biased stretch (low complexity) spans 1105-1132 (ESSPIESTSPSHSPVSSMESQNGSFSLE). Over residues 2304 to 2316 (PNPPRPTTFPTPL) the composition is skewed to pro residues.

This sequence belongs to the herpesviridae large tegument protein family. In terms of assembly, interacts with host CUL1 and CUL4A; these interactions inhibit the E3 ligase activity of cullins. Interacts with inner tegument protein. Interacts with capsid vertex specific component CVC2. Interacts with the major capsid protein/MCP.

The protein resides in the virion tegument. It is found in the host cytoplasm. It localises to the host nucleus. It catalyses the reaction Thiol-dependent hydrolysis of ester, thioester, amide, peptide and isopeptide bonds formed by the C-terminal Gly of ubiquitin (a 76-residue protein attached to proteins as an intracellular targeting signal).. Functionally, large tegument protein that plays multiple roles in the viral cycle. During viral entry, remains associated with the capsid while most of the tegument is detached and participates in the capsid transport toward the host nucleus. Plays a role in the routing of the capsid at the nuclear pore complex and subsequent uncoating. Within the host nucleus, acts as a deneddylase and promotes the degradation of nuclear CRLs (cullin-RING ubiquitin ligases) and thereby stabilizes nuclear CRL substrates, while cytoplasmic CRLs remain unaffected. These modifications prevent host cell cycle S-phase progression and create a favorable environment allowing efficient viral genome replication. Participates later in the secondary envelopment of capsids. Indeed, plays a linker role for the association of the outer viral tegument to the capsids together with the inner tegument protein. The polypeptide is Large tegument protein deneddylase (64) (Connochaetes taurinus (Blue wildebeest)).